The primary structure comprises 970 residues: Anaphase-promoting complex subunit 3 (970 aa).

TPR repeat units follow at residues 35–68, 74–107, 142–175, and 185–218; these read EDNLFKIAQIYYQMGKINQCLLILQQHPQITMIK, ALSNYDLGNIQEAESSIIKCCIYFEKYFQPNNNN, NNNSNSNNNENEYYGIYSDILCEFDDIVDINSIS, and GSVYYLMGLISKRKNQKEKAIKYLKKSVYTYPFL. The segment at 106-149 is disordered; it reads NNNNNNNNNNNNNNNNNNNNNNNKDKCNNSNKNNDSNNNSNSNN. The tract at residues 274-300 is disordered; it reads KVNNNNNNNNNNNNNINNNNSSNKNNE. TPR repeat units lie at residues 319 to 353 and 361 to 394; these read IKPNNFIKPPYHPNHRVGLTPSSFYDSSIHITPIN and TNQQQQQQQQQQPQQPSQQNLQKYNNRYFVTPQT. 3 disordered regions span residues 358–379, 414–525, and 556–582; these read IQQTNQQQQQQQQQQPQQPSQQ, PIPM…TTTT, and SSLSDDDYDEENHHYQQHHHLHHHNKS. Over residues 359 to 379 the composition is skewed to low complexity; the sequence is QQTNQQQQQQQQQQPQQPSQQ. The span at 424 to 443 shows a compositional bias: polar residues; the sequence is SKGSQHPPSSNSQTPYTPST. The segment covering 446 to 460 has biased composition (basic residues); that stretch reads VHHHQKQQPHQHKKS. A compositionally biased stretch (low complexity) spans 500–525; sequence TSSTSKQQQQQQQTKQQTTTTTTTTT. 9 TPR repeats span residues 546 to 580, 636 to 671, 672 to 705, 740 to 773, 775 to 807, 808 to 841, 843 to 876, 878 to 910, and 911 to 944; these read TEEFSLKSLSSSLSDDDYDEENHHYQQHHHLHHHN, LELFFILADSYRLLCLYLCKEAIESFKRLSEEQYRT, GWVLTKVAKAYHELIDYKEARSIFQEVSQMEPYR, PYSWVVVGNCFSLQRDHEAAIKLFRRAIQLDPDM, YAYTLCGHEYLANDELELALNAFRMAIRCDPRH, YNAFYGIGLIYYRQEKYNLAEYHFRKALSINESS, VLCCYLGMTLQHNPNKIQDGIDMLYRSIEIQPKN, FAKFKLAAFLFANQQYHHAIDQLLEFKEIEPKE, and TPIYILLGKCYKQLGELDKALDSLNTALDLDPKN. Basic residues predominate over residues 570-580; the sequence is YQQHHHLHHHN.

This sequence belongs to the APC3/CDC27 family. In terms of assembly, the APC/C is composed of at least 13 subunits that stay tightly associated throughout the cell cycle: anapc1, anapc2, anapc3, anapc4, anapc5, anapc6, anapc7, anapc8, anapc10, anapc11, cdc20, cdc26 and cdh1.

It localises to the nucleus. The protein operates within protein modification; protein ubiquitination. Its function is as follows. Component of the anaphase promoting complex/cyclosome (APC/C), a cell cycle-regulated E3 ubiquitin-protein ligase complex that controls progression through mitosis and the G1 phase of the cell cycle. This Dictyostelium discoideum (Social amoeba) protein is Anaphase-promoting complex subunit 3 (anapc3).